The primary structure comprises 702 residues: Pseudouridylate synthase PUS7L (702 aa).

The residue at position 79 (Ser-79) is a Phosphoserine. A disordered region spans residues 84–116; sequence NSEGAADLPGCSDGDRSHQSDSEKENSVNSVTS. The span at 96–109 shows a compositional bias: basic and acidic residues; sequence DGDRSHQSDSEKEN. Asp-339 (nucleophile) is an active-site residue. The TRUD domain maps to 424–646; sequence GFVNYYGPQR…PGCYRHIVKH (223 aa).

This sequence belongs to the pseudouridine synthase TruD family.

The catalysed reaction is a uridine in mRNA = a pseudouridine in mRNA. In terms of biological role, pseudouridine synthase that catalyzes pseudouridylation of mRNAs. The polypeptide is Pseudouridylate synthase PUS7L (Mus musculus (Mouse)).